A 130-amino-acid chain; its full sequence is Small ribosomal subunit protein uS11c (130 aa).

This sequence belongs to the universal ribosomal protein uS11 family. As to quaternary structure, part of the 30S ribosomal subunit.

The protein resides in the plastid. The protein localises to the chloroplast. The protein is Small ribosomal subunit protein uS11c of Anthoceros angustus (Hornwort).